Consider the following 398-residue polypeptide: Candidapepsin-3 (398 aa).

A signal peptide spans 1–18 (MFLKNIFIALAIALLADA). Positions 19-58 (TPTTSNNSPGFVALNFDVIKTHKNVTGPQGEINTNVNVKR) are cleaved as a propeptide — activation peptide. N-linked (GlcNAc...) asparagine glycosylation is present at N42. Residues 72–384 (YASDITVGSN…DLDDNEISLA (313 aa)) enclose the Peptidase A1 domain. Residue D90 is part of the active site. 90–92 (DTG) contributes to the pepstatin A binding site. Residues 103 to 112 (VSCQAGQGQD) are compositionally biased toward polar residues. Residues 103–139 (VSCQAGQGQDPNFCKNEGTYSPSSSSSSQNLNSPFSI) are disordered. Cysteines 105 and 116 form a disulfide. Over residues 123 to 138 (SPSSSSSSQNLNSPFS) the composition is skewed to low complexity. Pepstatin A is bound by residues 140 to 143 (EYGD) and 274 to 278 (DSGTT). D274 is a catalytic residue. An intrachain disulfide couples C312 to C350. Residue N313 is glycosylated (N-linked (GlcNAc...) asparagine).

This sequence belongs to the peptidase A1 family. O-glycosylated.

The protein localises to the secreted. It carries out the reaction Preferential cleavage at the carboxyl of hydrophobic amino acids, but fails to cleave 15-Leu-|-Tyr-16, 16-Tyr-|-Leu-17 and 24-Phe-|-Phe-25 of insulin B chain. Activates trypsinogen, and degrades keratin.. This Candida albicans (strain WO-1) (Yeast) protein is Candidapepsin-3 (SAP3).